We begin with the raw amino-acid sequence, 400 residues long: MSNAIDELQAIIAELKSELEEQKTCTRNARERIERMSAEVVDSNPYSRLMALQRMNIVKDYERIRDKAVAIVGVGGVGSVTADMLTRCGIGKLILFDYDKVELANMNRLFFTPDQAGLSKVEAAARTLSFINPDVRIETHNYNITTVDNFDKFLSTISESGMQQGQPVDLVLSCVDNFEARMAINAACNENNLNWFESGVSENAVSGHIQFIRPGDTACFACAPPLVVAENIDERTLKREGVCAASLPTTMGITAGLLVQNALKYLLNFGEVSDYLGYNALNDFFPKMTLKPNTQCDDRHCLQRQKEFQERPKPVLQQVEEVSDEPLHASNDWGIELVADDAPVAEQAPKATDTANVASGLRLAYEAPEKEAVDQAGHAAAGDGMPETSLEDLMAQMKSM.

Gly-76, Asp-97, Lys-120, Asn-143, and Asn-177 together coordinate ATP. Zn(2+)-binding residues include Cys-219 and Cys-222. The active-site Glycyl thioester intermediate is Cys-243. Zn(2+)-binding residues include Cys-296 and Cys-301.

Belongs to the ubiquitin-activating E1 family. UBA5 subfamily.

Functionally, E1-like enzyme which activates UFM1. This Drosophila virilis (Fruit fly) protein is Ubiquitin-like modifier-activating enzyme 5.